The chain runs to 244 residues: 1-(5-phosphoribosyl)-5-[(5-phosphoribosylamino)methylideneamino] imidazole-4-carboxamide isomerase (244 aa).

The active-site Proton acceptor is the Asp8. The active-site Proton donor is the Asp129.

It belongs to the HisA/HisF family.

The protein resides in the cytoplasm. The catalysed reaction is 1-(5-phospho-beta-D-ribosyl)-5-[(5-phospho-beta-D-ribosylamino)methylideneamino]imidazole-4-carboxamide = 5-[(5-phospho-1-deoxy-D-ribulos-1-ylimino)methylamino]-1-(5-phospho-beta-D-ribosyl)imidazole-4-carboxamide. It functions in the pathway amino-acid biosynthesis; L-histidine biosynthesis; L-histidine from 5-phospho-alpha-D-ribose 1-diphosphate: step 4/9. This is 1-(5-phosphoribosyl)-5-[(5-phosphoribosylamino)methylideneamino] imidazole-4-carboxamide isomerase from Allorhizobium ampelinum (strain ATCC BAA-846 / DSM 112012 / S4) (Agrobacterium vitis (strain S4)).